A 306-amino-acid polypeptide reads, in one-letter code: MESRLKPGLIVLCGPTAAGKSSLAIAIAQRLGSPILSADSRLVYRDFNIGTAKPTPAEQQQVPHYLMDLCDPRQVFTVGDYQDCAVPLIQQLQEKGMLPLLVGGTGLYIKAIVNGLRFPRIAPQPKLRSQLQALGQPLCHALLQRVDPVAGDRIHVNDRVRTLRALEVFYVSGDRLTDLQQEQPPSYPILQIGLDSDRLEARIQQRTQQMLTSGFVEEVQGLCDRYGSDLPLLNTLGYRQVCAFLQGSLSRSELPEQIVLQTRQYAKQQRTWFRADSSIQWIDAEASNRLERALDLIERFRKSEGV.

14 to 21 (GPTAAGKS) contacts ATP. Residue 16-21 (TAAGKS) participates in substrate binding. Positions 39–42 (DSRL) are interaction with substrate tRNA.

This sequence belongs to the IPP transferase family. In terms of assembly, monomer. Requires Mg(2+) as cofactor.

The catalysed reaction is adenosine(37) in tRNA + dimethylallyl diphosphate = N(6)-dimethylallyladenosine(37) in tRNA + diphosphate. Catalyzes the transfer of a dimethylallyl group onto the adenine at position 37 in tRNAs that read codons beginning with uridine, leading to the formation of N6-(dimethylallyl)adenosine (i(6)A). The sequence is that of tRNA dimethylallyltransferase from Synechococcus elongatus (strain ATCC 33912 / PCC 7942 / FACHB-805) (Anacystis nidulans R2).